The chain runs to 243 residues: RWD domain-containing protein 1 (243 aa).

An N-acetylthreonine modification is found at threonine 2. The RWD domain maps to 10 to 114; the sequence is NELEALESIY…TAVQEKLNEI (105 aa). Residues 142–197 are interaction with DRG2; sequence HGTPVTIENFLNWKAKFDAELLEIKKKRMKEEEQAGKNKLSGKQLFETDHNLDTSD. Position 144 is a phosphothreonine (threonine 144). The segment at 198-243 is disordered; sequence IQFLEDAGNNVEVDESLFQEMDDLELEDDEDDPDYNPADPESDSAD. Positions 209-243 are enriched in acidic residues; the sequence is EVDESLFQEMDDLELEDDEDDPDYNPADPESDSAD.

The protein belongs to the RWDD1/GIR2 family. In terms of assembly, interacts with DRG2. Interacts with androgen receptor.

Protects DRG2 from proteolytic degradation. In Homo sapiens (Human), this protein is RWD domain-containing protein 1 (RWDD1).